We begin with the raw amino-acid sequence, 275 residues long: NH(3)-dependent NAD(+) synthetase (275 aa).

Residue 46–53 (GISGGQDS) participates in ATP binding. Aspartate 52 is a binding site for Mg(2+). Deamido-NAD(+) is bound at residue arginine 140. An ATP-binding site is contributed by threonine 160. Mg(2+) is bound at residue glutamate 165. Deamido-NAD(+) is bound by residues lysine 173 and aspartate 180. Lysine 189 and threonine 211 together coordinate ATP. 260–261 (HK) contributes to the deamido-NAD(+) binding site.

It belongs to the NAD synthetase family. Homodimer.

The enzyme catalyses deamido-NAD(+) + NH4(+) + ATP = AMP + diphosphate + NAD(+) + H(+). The protein operates within cofactor biosynthesis; NAD(+) biosynthesis; NAD(+) from deamido-NAD(+) (ammonia route): step 1/1. Functionally, catalyzes the ATP-dependent amidation of deamido-NAD to form NAD. Uses ammonia as a nitrogen source. The protein is NH(3)-dependent NAD(+) synthetase of Shigella boydii serotype 18 (strain CDC 3083-94 / BS512).